Consider the following 177-residue polypeptide: Small ribosomal subunit protein uS5 (177 aa).

One can recognise an S5 DRBM domain in the interval 21–84; it reads LLDRVVKIKR…KQASRSMIHV (64 aa).

This sequence belongs to the universal ribosomal protein uS5 family. In terms of assembly, part of the 30S ribosomal subunit. Contacts proteins S4 and S8.

With S4 and S12 plays an important role in translational accuracy. Its function is as follows. Located at the back of the 30S subunit body where it stabilizes the conformation of the head with respect to the body. In Rhodopirellula baltica (strain DSM 10527 / NCIMB 13988 / SH1), this protein is Small ribosomal subunit protein uS5.